The sequence spans 434 residues: Serine hydroxymethyltransferase (434 aa).

Residues L133 and 137–139 (GHL) contribute to the (6S)-5,6,7,8-tetrahydrofolate site. K242 carries the post-translational modification N6-(pyridoxal phosphate)lysine.

Belongs to the SHMT family. Homodimer. It depends on pyridoxal 5'-phosphate as a cofactor.

Its subcellular location is the cytoplasm. The enzyme catalyses (6R)-5,10-methylene-5,6,7,8-tetrahydrofolate + glycine + H2O = (6S)-5,6,7,8-tetrahydrofolate + L-serine. It participates in one-carbon metabolism; tetrahydrofolate interconversion. It functions in the pathway amino-acid biosynthesis; glycine biosynthesis; glycine from L-serine: step 1/1. In terms of biological role, catalyzes the reversible interconversion of serine and glycine with tetrahydrofolate (THF) serving as the one-carbon carrier. This reaction serves as the major source of one-carbon groups required for the biosynthesis of purines, thymidylate, methionine, and other important biomolecules. Also exhibits THF-independent aldolase activity toward beta-hydroxyamino acids, producing glycine and aldehydes, via a retro-aldol mechanism. This is Serine hydroxymethyltransferase from Bradyrhizobium sp. (strain BTAi1 / ATCC BAA-1182).